We begin with the raw amino-acid sequence, 146 residues long: Large ribosomal subunit protein uL13 (146 aa).

Residues 126–146 form a disordered region; that stretch reads AGPKHPHAAQQPKVYEPRPRG.

The protein belongs to the universal ribosomal protein uL13 family. As to quaternary structure, part of the 50S ribosomal subunit.

Its function is as follows. This protein is one of the early assembly proteins of the 50S ribosomal subunit, although it is not seen to bind rRNA by itself. It is important during the early stages of 50S assembly. This chain is Large ribosomal subunit protein uL13, found in Roseiflexus castenholzii (strain DSM 13941 / HLO8).